The following is a 221-amino-acid chain: 7-cyano-7-deazaguanine synthase (221 aa).

10–20 (FSGGQDSTTCL) contributes to the ATP binding site. Residues C186, C195, C198, and C201 each contribute to the Zn(2+) site.

The protein belongs to the QueC family. Homodimer. Requires Zn(2+) as cofactor.

It catalyses the reaction 7-carboxy-7-deazaguanine + NH4(+) + ATP = 7-cyano-7-deazaguanine + ADP + phosphate + H2O + H(+). It participates in purine metabolism; 7-cyano-7-deazaguanine biosynthesis. Catalyzes the ATP-dependent conversion of 7-carboxy-7-deazaguanine (CDG) to 7-cyano-7-deazaguanine (preQ(0)). In Geobacillus thermodenitrificans (strain NG80-2), this protein is 7-cyano-7-deazaguanine synthase.